The sequence spans 142 residues: MSNSRSVLAFDYGTKSIGVAIGQELTGTANPLAALKAKDGIPNWDDIGKILKEWQPDLVVVGLPLNLEGGELESITPRAKKFANRIHGRFGCVVELHDERLSTVEAKAELFEHGGYRALSKGNIDSQSAVVILESWFERQYG.

It belongs to the YqgF nuclease family.

It localises to the cytoplasm. Could be a nuclease involved in processing of the 5'-end of pre-16S rRNA. This chain is Putative pre-16S rRNA nuclease, found in Photobacterium profundum (strain SS9).